The following is a 293-amino-acid chain: Acetylglutamate kinase (293 aa).

Substrate is bound by residues 70-71, R92, and N186; that span reads GG.

Belongs to the acetylglutamate kinase family. ArgB subfamily.

It is found in the cytoplasm. It catalyses the reaction N-acetyl-L-glutamate + ATP = N-acetyl-L-glutamyl 5-phosphate + ADP. It functions in the pathway amino-acid biosynthesis; L-arginine biosynthesis; N(2)-acetyl-L-ornithine from L-glutamate: step 2/4. Its function is as follows. Catalyzes the ATP-dependent phosphorylation of N-acetyl-L-glutamate. This Synechococcus sp. (strain CC9605) protein is Acetylglutamate kinase.